Consider the following 49-residue polypeptide: Large ribosomal subunit protein bL33B (49 aa).

The protein belongs to the bacterial ribosomal protein bL33 family.

The chain is Large ribosomal subunit protein bL33B from Levilactobacillus brevis (strain ATCC 367 / BCRC 12310 / CIP 105137 / JCM 1170 / LMG 11437 / NCIMB 947 / NCTC 947) (Lactobacillus brevis).